A 251-amino-acid chain; its full sequence is PF03932 family protein CutC (251 aa).

Belongs to the CutC family.

The protein resides in the cytoplasm. The sequence is that of PF03932 family protein CutC from Bacteroides fragilis (strain YCH46).